Here is a 148-residue protein sequence, read N- to C-terminus: Single-stranded DNA-binding protein, mitochondrial (148 aa).

Residues 1–16 constitute a mitochondrion transit peptide; it reads MFRRPVVQVLRQFVRH. The SSB domain occupies 30-141; it reads LNRVQLLGRV…IIADNIIFLS (112 aa). Phosphoserine occurs at positions 67 and 79. The residue at position 113 (K113) is an N6-acetyllysine. Residue K122 is modified to N6-succinyllysine.

Homotetramer. Interacts with MPG/AAG, through inhibition of its glycosylase activity it potentially prevents formation of DNA breaks in ssDNA, ensuring that base removal primarily occurs in dsDNA. Interacts with POLDIP2. Interacts with PRIMPOL.

Its subcellular location is the mitochondrion. It localises to the mitochondrion matrix. The protein localises to the mitochondrion nucleoid. In terms of biological role, binds preferentially and cooperatively to pyrimidine rich single-stranded DNA (ss-DNA). In vitro, required to maintain the copy number of mitochondrial DNA (mtDNA) and plays a crucial role during mtDNA replication by stimulating the activity of the replisome components POLG and TWNK at the replication fork. Promotes the activity of the gamma complex polymerase POLG, largely by organizing the template DNA and eliminating secondary structures to favor ss-DNA conformations that facilitate POLG activity. In addition it is able to promote the 5'-3' unwinding activity of the mtDNA helicase TWNK. May also function in mtDNA repair. The sequence is that of Single-stranded DNA-binding protein, mitochondrial (SSBP1) from Bos taurus (Bovine).